Consider the following 236-residue polypeptide: uncharacterized protein (236 aa).

Positions 1-29 are cleaved as a signal peptide; sequence MKGGDKMKKLILLMLLLPISLIGCTDEES.

This is an uncharacterized protein from Archaeoglobus fulgidus (strain ATCC 49558 / DSM 4304 / JCM 9628 / NBRC 100126 / VC-16).